Consider the following 527-residue polypeptide: ATP synthase subunit alpha (527 aa).

177 to 184 (GDRQTGKT) serves as a coordination point for ATP.

This sequence belongs to the ATPase alpha/beta chains family. As to quaternary structure, F-type ATPases have 2 components, CF(1) - the catalytic core - and CF(0) - the membrane proton channel. CF(1) has five subunits: alpha(3), beta(3), gamma(1), delta(1), epsilon(1). CF(0) has four main subunits: a(1), b(1), b'(1) and c(9-12).

It is found in the cell membrane. It catalyses the reaction ATP + H2O + 4 H(+)(in) = ADP + phosphate + 5 H(+)(out). Produces ATP from ADP in the presence of a proton gradient across the membrane. The alpha chain is a regulatory subunit. The chain is ATP synthase subunit alpha from Roseiflexus sp. (strain RS-1).